A 183-amino-acid polypeptide reads, in one-letter code: MNEARARIIINLRLSMDSLMRVFSHRSPPPSFGFACDVGAHPSSTAQNLPMTYGSVREMIDDFSIVFGVPKYRTSKPKKVTRKFSFTRLLQPIDNLVTCPACSNIHPSDTICDACYAKVHQLTSEIKKKMMQYNPYVGEKQDKEVYVKFRGEPDAPAAVVKGKRVLEIEKERPTWFKKLTLKE.

Residues C99, C102, C112, and C115 each coordinate Zn(2+).

The protein belongs to the bacterial ribosomal protein bL32 family. As to quaternary structure, component of the mitochondrial large ribosomal subunit (mt-LSU).

It is found in the mitochondrion. In terms of biological role, component of the mitochondrial large ribosomal subunit (mt-LSU). The mitochondrial ribosome (mitoribosome) is a large ribonucleoprotein complex responsible for the synthesis of proteins inside mitochondria. This Caenorhabditis elegans protein is Large ribosomal subunit protein bL32m (mrpl-32).